The primary structure comprises 416 residues: MLEQMGIAAKAASYKLALLSSGEKNRVLEKIADELEAQMESILSANVQDVEQARANGLSEAMLDRLALTPARLKAIADDVRQVCNLADPVGQVIDGGLLDSGLRLERRRVPLGVVGVIYEARPNVTVDVASLCLKTGNAVILRGGKETHRTNAATVRVIQKALKACGLPEAAVQAIDNPDRSLVNEMLRMDKYIDMLIPRGGAGLHKLCREQSTIPVITGGIGVCHIFVDSSADIAPALKIIVNAKTQRPSTCNTVETLLVHQDIAERFLPALSKQMAESGVTLHGDETVMQALHGPAKLVPLKPEELDNEFLSLDLNVVVVENMDGAIAHIREHGTQHSDAILTSDMHNAARFVNEVDSAAVYVNASTRFTDGGQFGLGAEVAVSTQKLHARGPMGLEALTTYKWIGFGDGTIRA.

Belongs to the gamma-glutamyl phosphate reductase family.

The protein localises to the cytoplasm. It carries out the reaction L-glutamate 5-semialdehyde + phosphate + NADP(+) = L-glutamyl 5-phosphate + NADPH + H(+). Its pathway is amino-acid biosynthesis; L-proline biosynthesis; L-glutamate 5-semialdehyde from L-glutamate: step 2/2. Functionally, catalyzes the NADPH-dependent reduction of L-glutamate 5-phosphate into L-glutamate 5-semialdehyde and phosphate. The product spontaneously undergoes cyclization to form 1-pyrroline-5-carboxylate. The sequence is that of Gamma-glutamyl phosphate reductase from Salmonella paratyphi C (strain RKS4594).